We begin with the raw amino-acid sequence, 285 residues long: RNA polymerase sigma factor RpoH (285 aa).

The segment at 53 to 122 is sigma-70 factor domain-2; sequence LILSHLRFVV…IHEYVLRNWR (70 aa). The Interaction with polymerase core subunit RpoC motif lies at 77–80; it reads DLIQ. Residues 229 to 281 are sigma-70 factor domain-4; sequence AMEGLDERSQDIIRARWLDEDNKSTLQELADRYGVSAERVRQLEKNAMKKLRA. Positions 254–273 form a DNA-binding region, H-T-H motif; the sequence is LQELADRYGVSAERVRQLEK.

Belongs to the sigma-70 factor family. RpoH subfamily. As to quaternary structure, interacts with the RNA polymerase core enzyme.

The protein resides in the cytoplasm. Functionally, sigma factors are initiation factors that promote the attachment of RNA polymerase to specific initiation sites and are then released. This sigma factor is involved in regulation of expression of heat shock genes. The sequence is that of RNA polymerase sigma factor RpoH from Enterobacter cloacae.